We begin with the raw amino-acid sequence, 1499 residues long: LNVNLMLGQAQECLLEKSMLDNRKSFLVARISAQVVDYYKEACRALENPDTASLLGRIQKDWKKLVQMKIYYFAAVAHLHMGKQAEEQQKFGERVAYFQSALDKLNEAIKLAKGQPDTVQDALRFAMDVIGGKYNSAKKDNDFIYHEAVPALDTLQPVKGAPLVKPLPVNPTDPAVTGPDIFAKLVPMAAHEASSLYSEEKAKLLREMLAKIEDKNEVLDQFMDSMQLDPDTVDNLDAYNHIPPQLMEKCAALSVRPDTVKNLVQSMQVLSGVFTDVEASLKDIRDLLEEDELQEQKLQETLGQAGAGPGPSVTKAELGEVRREWAKYTEVHEKASFTNSELHRAMNLHVGNLRLLSGPLDQVRAALPTPALTPEDKAVLQNLKRILAKVQEMRDQRVSLEQQLRELIQKDDITASLVTTDHSEMKKLFEEQLKKYDQLKVYLEQNLAAQDNVLRALTEANVQYAAVRRVLSELDQKWNSTLQTLVASYEAYEDLMKKSQEGKDFYADLESKVAALLERAQSLCRAQEAARQQLLDRELKKKAPPPRPTAPKPLLSRREEGEAAEAGDQPEELRSLPPDMMAGPRLPDPFLGTAAPLHFSPGPFPGSTGPATHYLSGPLPPGTYSGPTQLMQPRAAVPMAPGPVLYPAPVYTSELGLVPRSSPQHGIVSSPYAGVGPPQPIVGLPSAPPPQFSGPELAMDVRPATTTVDSVQAPISSHMALRPGPAPAPPQPCFPVPQPVPQSVPQPQPLPTPYTYSIGTKQHLTGPLPQHHFPPGIPTSFPAPRIGPQPPPQLQPQPQPQPQPQPPPQPQPQPQPQPQPQPQPQPQRPVFGPQPTQQPLPFQHPHLFPSQAPGILTPPPPYPFTPQPGVLGQPPPTRHTQLYPGPPPDTLPPHSGALPFPSPGPPHPHPTLAYGPAPSPRPLGPQATPVSIRGPPPANQPAPSPHLVPSPAPSPGPGPVPSRPPTAEPPPCLRRGAAAADLLSSSPESQHGGTQPPGGGQPLLQPTKVDAAERPTAQALRLIEQDPYEHPERLQKLQQELESFRGQLGDAGALDAVWRELQEAQEHDARGRSIAIARCYSLKNRHQDVMPYDSNRVVLRSGKDDYINASCVEGLSPYCPPLVATQRPLPGTAADFWLMVHEQKVSVIVMLVSEAEMEKQKVARYFPIERGQPMVHGALSVALSSVRTTDTHVERVLSLQFRDQSLKRSLVHLHFPTWPELGLPDSPGNLLRFIQEVHAHYLHQRPLHTPIVVHCSSGVGRTGAFALLYAAVQEVEAGSRIPELPQLVRRMRQQRKHMLQEKLHLKFCHEALVRHVEQVLQRHGVPPPGKPVASMSVSQKSHLPQDSQDLVLGGDVPISSIQATIAKLSIRPLGGLDSPAASLPSLVEPPGLPPASLPEPTPAPPSSPPPPSSPLPEPPQPEEEPSVPEAPSLGPPSSSLELLASLTPEAFSLDSSLRGKQRMSKQNFLQAHNGQGLRAAQPTDDPLSLLDPLWTLNKT.

Residues 1–219 enclose the BRO1 domain; that stretch reads LNVNLMLGQA…AKIEDKNEVL (219 aa). TPR repeat units lie at residues 75 to 108 and 199 to 232; these read AVAH…LNEA and EEKA…DPDT. 3 coiled-coil regions span residues 278–305, 377–464, and 506–537; these read EASL…LGQA, KAVL…NVQY, and YADL…LLDR. 2 disordered regions span residues 536–583 and 718–1006; these read DREL…MMAG and HMAL…LLQP. Residues 598–993 are his; the sequence is HFSPGPFPGS…SSSPESQHGG (396 aa). A compositionally biased stretch (pro residues) spans 724–752; it reads GPAPAPPQPCFPVPQPVPQSVPQPQPLPT. A compositionally biased stretch (polar residues) spans 754–763; that stretch reads YTYSIGTKQH. R785 is modified (omega-N-methylarginine). Pro residues-rich tracts occupy residues 785–827, 856–866, 900–909, and 934–972; these read RIGP…PQPQ, LTPPPPYPFTP, FPSPGPPHPH, and GPPP…PPPC. 20 consecutive repeat copies span residues 788-789, 790-791, 792-793, 794-795, 796-797, 798-799, 800-801, 802-803, 804-805, 806-807, 808-809, 810-811, 812-813, 814-815, 816-817, 818-819, 820-821, 822-823, 824-825, and 826-827. The 20 X 2 AA approximate tandem repeats of P-Q stretch occupies residues 788–827; the sequence is PQPPPQLQPQPQPQPQPQPPPQPQPQPQPQPQPQPQPQPQ. S985 and S986 each carry phosphoserine. A Phosphothreonine modification is found at T994. In terms of domain architecture, Tyrosine-protein phosphatase spans 1055 to 1315; sequence DAVWRELQEA…KFCHEALVRH (261 aa). Residue C1255 is the Phosphocysteine intermediate of the active site. Disordered regions lie at residues 1322–1351 and 1381–1499; these read RHGV…QDLV and ASLP…LNKT. Residues 1335–1348 are compositionally biased toward polar residues; that stretch reads MSVSQKSHLPQDSQ. A compositionally biased stretch (pro residues) spans 1390–1419; the sequence is PGLPPASLPEPTPAPPSSPPPPSSPLPEPP. A compositionally biased stretch (low complexity) spans 1427 to 1450; that stretch reads VPEAPSLGPPSSSLELLASLTPEA. The segment covering 1464-1473 has biased composition (polar residues); that stretch reads SKQNFLQAHN. Position 1478 is an omega-N-methylarginine (R1478). Positions 1482–1499 are enriched in low complexity; it reads PTDDPLSLLDPLWTLNKT.

This sequence belongs to the protein-tyrosine phosphatase family. Non-receptor class subfamily. Interacts with GRAP2 and GRB2. Interacts with UBAP1 and CHMP4B. As to expression, ubiquitously expressed, with highest levels in brain, testis and kidney, and lowest levels in skeletal muscle.

The protein localises to the nucleus. It localises to the cytoplasm. Its subcellular location is the cytoplasmic vesicle. The protein resides in the endosome. It is found in the cytoskeleton. The protein localises to the cilium basal body. It carries out the reaction O-phospho-L-tyrosyl-[protein] + H2O = L-tyrosyl-[protein] + phosphate. In terms of biological role, plays a role in sorting of endocytic ubiquitinated cargos into multivesicular bodies (MVBs) via its interaction with the ESCRT-I complex (endosomal sorting complex required for transport I), and possibly also other ESCRT complexes. May act as a negative regulator of Ras-mediated mitogenic activity. Plays a role in ciliogenesis. This Rattus norvegicus (Rat) protein is Tyrosine-protein phosphatase non-receptor type 23 (Ptpn23).